The chain runs to 341 residues: Protein pelota homolog (341 aa).

It belongs to the eukaryotic release factor 1 family. Pelota subfamily. As to quaternary structure, monomer. A divalent metal cation serves as cofactor.

The protein resides in the cytoplasm. In terms of biological role, may function in recognizing stalled ribosomes, interact with stem-loop structures in stalled mRNA molecules, and effect endonucleolytic cleavage of the mRNA. May play a role in the release non-functional ribosomes and degradation of damaged mRNAs. Has endoribonuclease activity. The sequence is that of Protein pelota homolog from Metallosphaera sedula (strain ATCC 51363 / DSM 5348 / JCM 9185 / NBRC 15509 / TH2).